Here is a 136-residue protein sequence, read N- to C-terminus: Large ribosomal subunit protein uL16 (136 aa).

Belongs to the universal ribosomal protein uL16 family. In terms of assembly, part of the 50S ribosomal subunit.

Its function is as follows. Binds 23S rRNA and is also seen to make contacts with the A and possibly P site tRNAs. The chain is Large ribosomal subunit protein uL16 from Rickettsia africae (strain ESF-5).